The following is a 337-amino-acid chain: Fructose-1,6-bisphosphatase class 1 (337 aa).

Residues glutamate 90, aspartate 112, leucine 114, and aspartate 115 each contribute to the Mg(2+) site. Residues 115-118, asparagine 211, and lysine 277 contribute to the substrate site; that span reads DGSS. Glutamate 283 contributes to the Mg(2+) binding site.

Belongs to the FBPase class 1 family. Homotetramer. Requires Mg(2+) as cofactor.

Its subcellular location is the cytoplasm. It carries out the reaction beta-D-fructose 1,6-bisphosphate + H2O = beta-D-fructose 6-phosphate + phosphate. It participates in carbohydrate biosynthesis; gluconeogenesis. This chain is Fructose-1,6-bisphosphatase class 1, found in Azotobacter vinelandii (strain DJ / ATCC BAA-1303).